The primary structure comprises 384 residues: Carbazole 1,9a-dioxygenase, terminal oxygenase component CarAa (384 aa).

The region spanning 29-135 (WYPVMFSKEI…VQEAKGCVFI (107 aa)) is the Rieske domain. [2Fe-2S] cluster contacts are provided by C69, H71, C90, and H93.

In terms of assembly, homotrimer. Carbazole 1,9a-dioxygenase complex consists of a terminal oxygenase component CarAa, a ferredoxin reductase component CarAd and a ferredoxin component CarAc. [2Fe-2S] cluster serves as cofactor.

It carries out the reaction 9H-carbazole + NADH + O2 + H(+) = 2'-aminobiphenyl-2,3-diol + NAD(+). The catalysed reaction is 9H-carbazole + NADPH + O2 + H(+) = 2'-aminobiphenyl-2,3-diol + NADP(+). Part of the multicomponent carbazole 1,9a-dioxygenase (CARDO), that converts carbazole (CAR) into 2-aminobiphenyl-2,3-diol. Catalyzes the dioxygenation at the angular (C-9a) and adjacent (C-1) positions of carbazole to yield a highly unstable cis-hydrodiol intermediate which is spontaneously converted to 2-aminobiphenyl-2,3-diol. It is also able to attack the angular position adjacent of hetero atom of heterocyclic aromatic compounds such as polychlorinated dibenzo-p-dioxin (DD) and dibenzofuran (DBF). It was also shown that CARDO has the ability to metabolize biphenyl and polycyclic aromatic hydrocarbons, such as naphthalene and phenanthrene. The sequence is that of Carbazole 1,9a-dioxygenase, terminal oxygenase component CarAa (carAa) from Metapseudomonas resinovorans (Pseudomonas resinovorans).